The chain runs to 374 residues: DNA replication and repair protein RecF (374 aa).

30-37 (GNNAQGKS) contributes to the ATP binding site.

Belongs to the RecF family.

Its subcellular location is the cytoplasm. Its function is as follows. The RecF protein is involved in DNA metabolism; it is required for DNA replication and normal SOS inducibility. RecF binds preferentially to single-stranded, linear DNA. It also seems to bind ATP. This chain is DNA replication and repair protein RecF, found in Nostoc punctiforme (strain ATCC 29133 / PCC 73102).